Here is a 410-residue protein sequence, read N- to C-terminus: Translation initiation factor 2 subunit gamma (410 aa).

A tr-type G domain is found at 6 to 203 (QSEVNIGMVG…AIQDFIPTPE (198 aa)). The segment at 15–22 (GHVDHGKT) is G1. Mg(2+) is bound by residues Asp-18, Thr-22, Gly-43, and Ser-45. Residue 18–23 (DHGKTS) coordinates GTP. Residues 43–47 (GISIR) form a G2 region. Zn(2+) is bound by residues Cys-58, Cys-61, Cys-73, and Cys-76. The G3 stretch occupies residues 90–93 (DAPG). GTP-binding positions include 146-149 (NKID) and 181-183 (SAH). Residues 146–149 (NKID) form a G4 region. Positions 181–183 (SAH) are G5.

Belongs to the TRAFAC class translation factor GTPase superfamily. Classic translation factor GTPase family. EIF2G subfamily. Heterotrimer composed of an alpha, a beta and a gamma chain. Mg(2+) serves as cofactor.

It catalyses the reaction GTP + H2O = GDP + phosphate + H(+). EIF-2 functions in the early steps of protein synthesis by forming a ternary complex with GTP and initiator tRNA. In Methanococcus maripaludis (strain DSM 14266 / JCM 13030 / NBRC 101832 / S2 / LL), this protein is Translation initiation factor 2 subunit gamma.